Consider the following 460-residue polypeptide: MEMYFKRMKDEWTGLVEQADPLIRAKAAEIAVAHAHYLSIEFYRIVRIDPHAEEFLSNEQVERQLKSAMERWIINVLSAQVDDVERLIQIQHTVAEVHARIGIPVEIVEMGFRVLKKILYPVIFSSDYSAAEKLQVYHFSINSIDIAMEVMTRAFTFSDSSASKEDENYRIFSLLENAEEEKERQIASILSWEIDIIYKILLDSDLGSSLPLSQADFGLWFNHKGRHYFSGIAEVGHISRLIQDFDGIFNQTMRNTRNLNNRSLRVKFLLQIRNTVSQIITLLRELFEEVSRHEVGMDVLTKLLNRRFLPTIFKREIAHANRTGTPLSVLIIDVDKFKEINDTWGHNTGDEILRKVSQAFYDNVHSSDYVFRYGGDEFIIVLTEASENETLRTAERIRSRVEKTKLKAANGEDIALSLSIGAAMFNGHPDYERLIQIADEALYIAKRRGRNRVELWKASL.

His98 contributes to the heme binding site. The GGDEF domain occupies 325-458 (TPLSVLIIDV…GRNRVELWKA (134 aa)). Position 333 (Asp333) interacts with Mg(2+). Asn341 and Asp350 together coordinate substrate. Asp376 serves as a coordination point for Mg(2+). The Proton acceptor role is filled by Asp376.

Requires heme as cofactor. It depends on Mg(2+) as a cofactor.

The catalysed reaction is 2 GTP = 3',3'-c-di-GMP + 2 diphosphate. Its pathway is purine metabolism; 3',5'-cyclic di-GMP biosynthesis. Globin-coupled heme-based oxygen sensor protein displaying diguanylate cyclase (DGC) activity in response to oxygen availability. Thus, catalyzes the synthesis of cyclic diguanylate (c-di-GMP) via the condensation of 2 GTP molecules. Cyclic-di-GMP is a second messenger which controls cell surface-associated traits in bacteria. This chain is Diguanylate cyclase DosC (dosC), found in Shigella sonnei (strain Ss046).